The sequence spans 510 residues: Bifunctional pantoate ligase/cytidylate kinase (510 aa).

The pantoate--beta-alanine ligase stretch occupies residues 1 to 276; that stretch reads MKKVIIRKTE…CGETRLIDHV (276 aa). 29–36 serves as a coordination point for ATP; that stretch reads MGNLHNGH. The Proton donor role is filled by histidine 36. Glutamine 61 provides a ligand contact to (R)-pantoate. Glutamine 61 contributes to the beta-alanine binding site. 150–153 contributes to the ATP binding site; it reads GEKD. Residue glutamine 156 participates in (R)-pantoate binding. 187-190 lines the ATP pocket; it reads LSSR. The cytidylate kinase stretch occupies residues 277-510; it reads FLMKRSPIIA…DKIPKETQIR (234 aa).

The protein in the N-terminal section; belongs to the pantothenate synthetase family. It in the C-terminal section; belongs to the cytidylate kinase family. Type 1 subfamily.

It is found in the cytoplasm. The enzyme catalyses (R)-pantoate + beta-alanine + ATP = (R)-pantothenate + AMP + diphosphate + H(+). It carries out the reaction CMP + ATP = CDP + ADP. The catalysed reaction is dCMP + ATP = dCDP + ADP. The protein operates within cofactor biosynthesis; (R)-pantothenate biosynthesis; (R)-pantothenate from (R)-pantoate and beta-alanine: step 1/1. Functionally, catalyzes the condensation of pantoate with beta-alanine in an ATP-dependent reaction via a pantoyl-adenylate intermediate. Catalyzes the transfer of a phosphate group from ATP to either CMP or dCMP to form CDP or dCDP and ADP, respectively. The chain is Bifunctional pantoate ligase/cytidylate kinase from Prochlorococcus marinus (strain MIT 9312).